The chain runs to 192 residues: tRNA (pseudouridine(54)-N(1))-methyltransferase (192 aa).

2 residues coordinate S-adenosyl-L-methionine: Leu-114 and Gly-138.

It belongs to the methyltransferase superfamily. TrmY family. In terms of assembly, homodimer.

The protein localises to the cytoplasm. It carries out the reaction pseudouridine(54) in tRNA + S-adenosyl-L-methionine = N(1)-methylpseudouridine(54) in tRNA + S-adenosyl-L-homocysteine + H(+). Specifically catalyzes the N1-methylation of pseudouridine at position 54 (Psi54) in tRNAs. In Aeropyrum pernix (strain ATCC 700893 / DSM 11879 / JCM 9820 / NBRC 100138 / K1), this protein is tRNA (pseudouridine(54)-N(1))-methyltransferase.